We begin with the raw amino-acid sequence, 434 residues long: Glucose-6-phosphate 1-dehydrogenase (434 aa).

NADP(+)-binding positions include 7 to 14 (GSSGDLAK), arginine 36, tyrosine 93, and lysine 112. Residues lysine 112, 137 to 141 (HYLLK), glutamate 175, and aspartate 193 each bind D-glucose 6-phosphate. The Proton acceptor role is filled by histidine 198. 2 residues coordinate D-glucose 6-phosphate: lysine 280 and lysine 285. Residue arginine 286 participates in NADP(+) binding.

The protein belongs to the glucose-6-phosphate dehydrogenase family.

The enzyme catalyses D-glucose 6-phosphate + NADP(+) = 6-phospho-D-glucono-1,5-lactone + NADPH + H(+). Its pathway is carbohydrate degradation; pentose phosphate pathway; D-ribulose 5-phosphate from D-glucose 6-phosphate (oxidative stage): step 1/3. Catalyzes the rate-limiting step of the oxidative pentose-phosphate pathway, which represents a route for the dissimilation of carbohydrates besides glycolysis. The main function of this enzyme is to provide reducing power (NADPH) and pentose phosphates for fatty acid and nucleic acid synthesis. This chain is Glucose-6-phosphate 1-dehydrogenase (ZWF1), found in Encephalitozoon cuniculi (strain GB-M1) (Microsporidian parasite).